The sequence spans 205 residues: E3 ubiquitin-protein ligase complex slx8-rfp subunit rfp2 (205 aa).

An RING-type; degenerate zinc finger spans residues 147–190; it reads CAKCGNELVSDEKKSIFAAKCGHLFCSTCAKELRKKTVPCPVQH.

In terms of assembly, part of an E3 ubiquitin complex including rfp1, rfp2 and slx8. Interacts with slx8.

It localises to the nucleus. It carries out the reaction S-ubiquitinyl-[E2 ubiquitin-conjugating enzyme]-L-cysteine + [acceptor protein]-L-lysine = [E2 ubiquitin-conjugating enzyme]-L-cysteine + N(6)-ubiquitinyl-[acceptor protein]-L-lysine.. The protein operates within protein modification; protein ubiquitination. In terms of biological role, mediates ubiquitination and subsequent desumoylation/degradation of sumoylated proteins and proteins containing SUMO-like domains. Involved in maintaining genome stability where it acts in the cellular response to DNA damage. The chain is E3 ubiquitin-protein ligase complex slx8-rfp subunit rfp2 (rfp2) from Schizosaccharomyces pombe (strain 972 / ATCC 24843) (Fission yeast).